The following is a 438-amino-acid chain: Elongation factor 1-alpha (438 aa).

The tr-type G domain maps to 6 to 229; sequence KPHLNIVIIG…ALDTLEVPPK (224 aa). Positions 15-22 are G1; the sequence is GHVDHGKS. 15–22 is a binding site for GTP; it reads GHVDHGKS. Residue Ser-22 participates in Mg(2+) binding. The tract at residues 71 to 75 is G2; sequence GVTIS. The tract at residues 92–95 is G3; it reads DAPG. GTP contacts are provided by residues 92–96 and 154–157; these read DAPGH and NKMD. Residues 154 to 157 are G4; the sequence is NKMD. Positions 195–197 are G5; it reads SAW.

The protein belongs to the TRAFAC class translation factor GTPase superfamily. Classic translation factor GTPase family. EF-Tu/EF-1A subfamily.

The protein resides in the cytoplasm. The enzyme catalyses GTP + H2O = GDP + phosphate + H(+). GTP hydrolase that promotes the GTP-dependent binding of aminoacyl-tRNA to the A-site of ribosomes during protein biosynthesis. The chain is Elongation factor 1-alpha from Desulfurococcus mucosus (Desulfurococcus mobilis).